We begin with the raw amino-acid sequence, 551 residues long: Eukaryotic translation initiation factor 3 subunit D-2 (551 aa).

A disordered region spans residues 105–152 (NNVRARGRTGRGSQAVGGPGGPAAGGSTANSTKYGKGRNTRNTQNVGR). Gly residues predominate over residues 119 to 128 (AVGGPGGPAA). Positions 290-304 (QFDLLTVNETSLEPP) are RNA gate.

It belongs to the eIF-3 subunit D family. As to quaternary structure, component of the eukaryotic translation initiation factor 3 (eIF-3) complex. The eIF-3 complex interacts with pix.

Its subcellular location is the cytoplasm. In terms of biological role, mRNA cap-binding component of the eukaryotic translation initiation factor 3 (eIF-3) complex, which is involved in protein synthesis of a specialized repertoire of mRNAs and, together with other initiation factors, stimulates binding of mRNA and methionyl-tRNAi to the 40S ribosome. The eIF-3 complex specifically targets and initiates translation of a subset of mRNAs involved in cell proliferation. In the eIF-3 complex, eif3d specifically recognizes and binds the 7-methylguanosine cap of a subset of mRNAs. The polypeptide is Eukaryotic translation initiation factor 3 subunit D-2 (Drosophila erecta (Fruit fly)).